A 146-amino-acid polypeptide reads, in one-letter code: Snaclec mucetin subunit beta (146 aa).

Residues 1 to 23 form the signal peptide; it reads MGRFIFVSFGLLVVFISLSGTEA. Disulfide bonds link C27/C38, C55/C144, and C121/C136. The C-type lectin domain maps to 34–145; the sequence is YDEHCYQVFQ…CSSKRYVVCK (112 aa).

Belongs to the snaclec family. As to quaternary structure, dimer and tetramer of heterodimers of alpha and beta subunits ((alphabeta)(2) and (alphabeta)(4)); disulfide-linked. These two multimeric forms are found. Post-translationally, the complex is glycosylated. In terms of tissue distribution, expressed by the venom gland.

The protein localises to the secreted. Its function is as follows. Potent platelet activator that acts via GPIb (GP1BA/GP1BB). After activation by the toxin, the receptor is redistributed on platelet surface thanks to cytoskeletal translocation. The indirect activation of integrin alpha-IIb/beta-3 (ITGA2B/ITGB3) also induced by the toxin is downstream the cytoskeletal translocation of GPIb. The chain is Snaclec mucetin subunit beta from Protobothrops mucrosquamatus (Taiwan habu).